Reading from the N-terminus, the 239-residue chain is Probable methylthioribulose-1-phosphate dehydratase (239 aa).

C100 lines the substrate pocket. The Zn(2+) site is built by H118 and H120. Catalysis depends on E141, which acts as the Proton donor/acceptor. Residue H197 participates in Zn(2+) binding.

Belongs to the aldolase class II family. MtnB subfamily. The cofactor is Zn(2+).

The protein localises to the cytoplasm. The enzyme catalyses 5-(methylsulfanyl)-D-ribulose 1-phosphate = 5-methylsulfanyl-2,3-dioxopentyl phosphate + H2O. Its pathway is amino-acid biosynthesis; L-methionine biosynthesis via salvage pathway; L-methionine from S-methyl-5-thio-alpha-D-ribose 1-phosphate: step 2/6. Functionally, catalyzes the dehydration of methylthioribulose-1-phosphate (MTRu-1-P) into 2,3-diketo-5-methylthiopentyl-1-phosphate (DK-MTP-1-P). This chain is Probable methylthioribulose-1-phosphate dehydratase, found in Leishmania major.